The primary structure comprises 277 residues: Hydroxyethylthiazole kinase (277 aa).

A substrate-binding site is contributed by Met-55. ATP-binding residues include Arg-130 and Ser-176. Residue Gly-203 participates in substrate binding.

Belongs to the Thz kinase family. Mg(2+) serves as cofactor.

It carries out the reaction 5-(2-hydroxyethyl)-4-methylthiazole + ATP = 4-methyl-5-(2-phosphooxyethyl)-thiazole + ADP + H(+). Its pathway is cofactor biosynthesis; thiamine diphosphate biosynthesis; 4-methyl-5-(2-phosphoethyl)-thiazole from 5-(2-hydroxyethyl)-4-methylthiazole: step 1/1. Functionally, catalyzes the phosphorylation of the hydroxyl group of 4-methyl-5-beta-hydroxyethylthiazole (THZ). This Cutibacterium acnes (strain DSM 16379 / KPA171202) (Propionibacterium acnes) protein is Hydroxyethylthiazole kinase.